A 221-amino-acid chain; its full sequence is Glutathione S-transferase (221 aa).

An N-acetylmethionine modification is found at Met-1. An N-acetylalanine; in Glutathione S-transferase, N-terminally processed modification is found at Ala-2. The 80-residue stretch at 3–82 folds into the GST N-terminal domain; the sequence is GEQNIKYFNI…YIAEKYNLLG (80 aa). Glutathione contacts are provided by residues Tyr-9, Lys-45, 53–54, and 66–67; these read QV and QT. One can recognise a GST C-terminal domain in the interval 84–208; the sequence is DMKEHAQIIM…PGSKRKPVPD (125 aa).

Belongs to the GST superfamily. Alpha family. In terms of assembly, homodimer or heterodimer of GSTA1 and GSTA2.

The protein localises to the cytoplasm. The catalysed reaction is RX + glutathione = an S-substituted glutathione + a halide anion + H(+). It carries out the reaction prostaglandin A2 + glutathione = prostaglandin A2-S-(R)-glutathione. It catalyses the reaction prostaglandin J2 + glutathione = prostaglandin J2-S-(R)-glutathione. The enzyme catalyses (13S)-hydroperoxy-(9Z,11E)-octadecadienoate + 2 glutathione = (13S)-hydroxy-(9Z,11E)-octadecadienoate + glutathione disulfide + H2O. The catalysed reaction is androst-5-ene-3,17-dione = androst-4-ene-3,17-dione. In terms of biological role, glutathione S-transferase that catalyzes the nucleophilic attack of the sulfur atom of glutathione on the electrophilic groups of a wide range of exogenous and endogenous compounds. Involved in the formation of glutathione conjugates of both prostaglandin A2 (PGA2) and prostaglandin J2 (PGJ2). It also catalyzes the isomerization of D5-androstene-3,17-dione (AD) into D4-androstene-3,17-dione and may therefore play an important role in hormone biosynthesis. Through its glutathione-dependent peroxidase activity toward the fatty acid hydroperoxide (13S)-hydroperoxy-(9Z,11E)-octadecadienoate/13-HPODE it is also involved in the metabolism of oxidized linoleic acid. In Antechinus stuartii (Brown marsupial mouse), this protein is Glutathione S-transferase.